A 428-amino-acid polypeptide reads, in one-letter code: Isocitrate dehydrogenase [NADP], mitochondrial (428 aa).

The transit peptide at 1–16 (MSMLSRRLFSTSRLAA) directs the protein to the mitochondrion. NADP(+) is bound by residues 91–93 (TIT) and arginine 98. Threonine 93 contacts substrate. Substrate is bound by residues 110-116 (SPNGTIR), arginine 125, and arginine 148. Aspartate 269 is a Mn(2+) binding site. Lysine 277 is an NADP(+) binding site. Aspartate 292 serves as a coordination point for Mn(2+). Residues 327-332 (GTVTRH) and asparagine 345 each bind NADP(+).

Belongs to the isocitrate and isopropylmalate dehydrogenases family. Homodimer. It depends on Mg(2+) as a cofactor. The cofactor is Mn(2+).

The protein resides in the mitochondrion. It carries out the reaction D-threo-isocitrate + NADP(+) = 2-oxoglutarate + CO2 + NADPH. With respect to regulation, the enzyme is subject to end product inhibition by NADPH and 2-oxoglutarate. Its function is as follows. Mitochondrial IDP1 may regulate flux through the tricarboxylic acid cycle and respiration. Its probably critical function is the production of NADPH. In Saccharomyces cerevisiae (strain ATCC 204508 / S288c) (Baker's yeast), this protein is Isocitrate dehydrogenase [NADP], mitochondrial (IDP1).